The primary structure comprises 477 residues: Ubiquinone biosynthesis monooxygenase COQ6, mitochondrial (477 aa).

Residues Met-1–Leu-25 constitute a mitochondrion transit peptide.

The protein belongs to the UbiH/COQ6 family. As to quaternary structure, component of a multi-subunit COQ enzyme complex. FAD is required as a cofactor.

It is found in the mitochondrion inner membrane. The catalysed reaction is a 4-hydroxy-3-(all-trans-polyprenyl)benzoate + 2 reduced [2Fe-2S]-[ferredoxin] + O2 + 2 H(+) = a 3,4-dihydroxy-5-(all-trans-polyprenyl)benzoate + 2 oxidized [2Fe-2S]-[ferredoxin] + H2O. It catalyses the reaction a 2-methoxy-6-(all-trans-polyprenyl)phenol + 2 reduced [2Fe-2S]-[ferredoxin] + O2 + 2 H(+) = a 2-methoxy-6-(all-trans-polyprenyl)benzene-1,4-diol + 2 oxidized [2Fe-2S]-[ferredoxin] + H2O. The protein operates within cofactor biosynthesis; ubiquinone biosynthesis. Functionally, FAD-dependent monooxygenase required for two non-consecutive steps during ubiquinone biosynthesis. Required for the C5-ring hydroxylation during ubiquinone biosynthesis by catalyzing the hydroxylation of 4-hydroxy-3-(all-trans-polyprenyl)benzoic acid to 3,4-dihydroxy-5-(all-trans-polyprenyl)benzoic acid. Also acts downstream of coq4, for the C1-hydroxylation during ubiquinone biosynthesis by catalyzing the hydroxylation of 2-methoxy-6-(all-trans-polyprenyl)phenol to 2-methoxy-6-(all-trans-polyprenyl)benzene-1,4-diol. The electrons required for the hydroxylation reaction are funneled indirectly to Coq6 from NADPH via a ferredoxin/ferredoxin reductase system. The protein is Ubiquinone biosynthesis monooxygenase COQ6, mitochondrial of Drosophila melanogaster (Fruit fly).